Reading from the N-terminus, the 105-residue chain is Met repressor (105 aa).

This sequence belongs to the MetJ family. As to quaternary structure, homodimer.

The protein resides in the cytoplasm. Its function is as follows. This regulatory protein, when combined with SAM (S-adenosylmethionine) represses the expression of the methionine regulon and of enzymes involved in SAM synthesis. This Erwinia tasmaniensis (strain DSM 17950 / CFBP 7177 / CIP 109463 / NCPPB 4357 / Et1/99) protein is Met repressor.